Reading from the N-terminus, the 352-residue chain is Long-chain-alcohol O-fatty-acyltransferase (352 aa).

The next 8 helical transmembrane spans lie at 13–33 (VWIS…VAPH), 34–54 (GGAL…FLPL), 67–87 (LYLV…LGPL), 128–148 (KVVL…IYEF), 155–175 (FVIS…TLAA), 239–259 (VAGA…VFFF), 267–287 (SWEV…EMVV), and 303–323 (GALT…PQLV).

The protein belongs to the wax synthase family.

The protein localises to the microsome membrane. The catalysed reaction is a long chain fatty alcohol + a fatty acyl-CoA = a wax ester + CoA. Catalyzes the final step in the synthesis of long-chain linear esters (waxes). Has activity with both saturated and monounsaturated acyl-CoA ranging from 14 to 24 carbons in length, but C20:1 acyl-CoA is the preferred substrate. The sequence is that of Long-chain-alcohol O-fatty-acyltransferase from Simmondsia chinensis (Jojoba).